Reading from the N-terminus, the 277-residue chain is Bis(5'-nucleosyl)-tetraphosphatase, symmetrical (277 aa).

The protein belongs to the Ap4A hydrolase family.

It catalyses the reaction P(1),P(4)-bis(5'-adenosyl) tetraphosphate + H2O = 2 ADP + 2 H(+). Functionally, hydrolyzes diadenosine 5',5'''-P1,P4-tetraphosphate to yield ADP. The protein is Bis(5'-nucleosyl)-tetraphosphatase, symmetrical of Bordetella pertussis (strain Tohama I / ATCC BAA-589 / NCTC 13251).